The chain runs to 913 residues: Protein translocase subunit SecA (913 aa).

ATP contacts are provided by residues glutamine 87, 105–109 (GEGKT), and aspartate 512. Residues cysteine 897, cysteine 899, cysteine 908, and histidine 909 each contribute to the Zn(2+) site.

Belongs to the SecA family. In terms of assembly, monomer and homodimer. Part of the essential Sec protein translocation apparatus which comprises SecA, SecYEG and auxiliary proteins SecDF-YajC and YidC. Requires Zn(2+) as cofactor.

It is found in the cell inner membrane. The protein resides in the cytoplasm. It carries out the reaction ATP + H2O + cellular proteinSide 1 = ADP + phosphate + cellular proteinSide 2.. Functionally, part of the Sec protein translocase complex. Interacts with the SecYEG preprotein conducting channel. Has a central role in coupling the hydrolysis of ATP to the transfer of proteins into and across the cell membrane, serving both as a receptor for the preprotein-SecB complex and as an ATP-driven molecular motor driving the stepwise translocation of polypeptide chains across the membrane. This is Protein translocase subunit SecA from Pseudomonas fluorescens (strain ATCC BAA-477 / NRRL B-23932 / Pf-5).